The chain runs to 442 residues: Adenylosuccinate synthetase (442 aa).

GTP is bound by residues 30–36 and 58–60; these read GDEGKGK and GHT. Catalysis depends on Asp-31, which acts as the Proton acceptor. Mg(2+) contacts are provided by Asp-31 and Gly-58. IMP contacts are provided by residues 31 to 34, 56 to 59, Thr-148, Arg-162, Asn-241, Thr-256, and Arg-320; these read DEGK and NAGH. His-59 serves as the catalytic Proton donor. Substrate is bound at residue 316–322; the sequence is TTTGRRR. Residues Arg-322, 348-350, and 430-432 contribute to the GTP site; these read KLD and GVG.

It belongs to the adenylosuccinate synthetase family. In terms of assembly, homodimer. It depends on Mg(2+) as a cofactor.

It localises to the cytoplasm. It catalyses the reaction IMP + L-aspartate + GTP = N(6)-(1,2-dicarboxyethyl)-AMP + GDP + phosphate + 2 H(+). It functions in the pathway purine metabolism; AMP biosynthesis via de novo pathway; AMP from IMP: step 1/2. Functionally, plays an important role in the de novo pathway and in the salvage pathway of purine nucleotide biosynthesis. Catalyzes the first committed step in the biosynthesis of AMP from IMP. This Trichoplax adhaerens (Trichoplax reptans) protein is Adenylosuccinate synthetase.